The chain runs to 395 residues: Phosphopentomutase (395 aa).

Mn(2+)-binding residues include aspartate 16, aspartate 289, histidine 294, aspartate 330, histidine 331, and histidine 342.

The protein belongs to the phosphopentomutase family. Requires Mn(2+) as cofactor.

The protein localises to the cytoplasm. It catalyses the reaction 2-deoxy-alpha-D-ribose 1-phosphate = 2-deoxy-D-ribose 5-phosphate. The enzyme catalyses alpha-D-ribose 1-phosphate = D-ribose 5-phosphate. It functions in the pathway carbohydrate degradation; 2-deoxy-D-ribose 1-phosphate degradation; D-glyceraldehyde 3-phosphate and acetaldehyde from 2-deoxy-alpha-D-ribose 1-phosphate: step 1/2. In terms of biological role, isomerase that catalyzes the conversion of deoxy-ribose 1-phosphate (dRib-1-P) and ribose 1-phosphate (Rib-1-P) to deoxy-ribose 5-phosphate (dRib-5-P) and ribose 5-phosphate (Rib-5-P), respectively. This chain is Phosphopentomutase, found in Geobacillus kaustophilus (strain HTA426).